The primary structure comprises 156 residues: Calglandulin (156 aa).

4 EF-hand domains span residues 8–43 (EQIT…IGIN), 44–79 (PTKR…YHEK), 82–117 (NQDE…AGEP), and 118–153 (LNEH…ESFK). Ca(2+) is bound by residues aspartate 131, aspartate 133, aspartate 135, threonine 137, and glutamate 142.

The protein belongs to the calmodulin family. Calglandulin subfamily. In terms of tissue distribution, expressed by the venom gland.

Its subcellular location is the cytoplasm. May be involved in the cellular control mechanism of the secretion of toxins from the gland into the venom. The sequence is that of Calglandulin from Tropidechis carinatus (Australian rough-scaled snake).